The following is a 706-amino-acid chain: MATQTNESFPLEKTRNIGIMAHIDAGKTTLTERILFYTGRLHRMGEVHEGAATMDFMEQEKERGITITSAATTCYWDDHRVNIIDTPGHVDFTVEVERSLRVLDGAIALFCAVGGVEPQSETVWRQAEKYDVPRIGFVNKMDRTGADFENVLEMMEDRLSANPVPVQYPIGAGDMFRGVIDLIEGKAIIYDDESQGMQWDVREIPDDLESKAEHWRINLLESVAEYDDELLMKYLDEDQEVEPEELHTVIRKATLNRDMTPMFCGSALKNTGVQRVLDGVTNYLPSPNDVPAITGHHPQDKEEDITRHPREDEPFSAVAFKITTDPYVGKLTFVRVYSGTLESGSRVYSPTRDEDERIGRMMFMHADSREDVDVIRAGDIAAVVGPKNLKTGDTICDPDHPVVLESMDFPEPVIRIAVEPRTKADRDKLTNGLTKLAEEDPTFNVRTDEETGQTIIAGMGELHLEIIIDRLKQEFKVEANVGQPQVAYREALTDMIDEHYVLKKQSGGRGQFAEVYMDVGPIPEEEEEESGLVFENEIKGGVIPKEFIPSVERGIESAMEDGPLAGYPIEGVWVRLYDGDHHEVDSDQNAFEIAGRLGFREAARHANPVLMEPVMEVEVVTPDDYMGDIIGDLNGRRGQIGQMGQRNDAQVINAEVPLSEMFGYSTDLRSLSQGRAIYTMQFGSYEPVPEEVASEIMDEQTMSATA.

Residues 12 to 288 (EKTRNIGIMA…GVTNYLPSPN (277 aa)) form the tr-type G domain. Residues 21–28 (AHIDAGKT), 85–89 (DTPGH), and 139–142 (NKMD) contribute to the GTP site. The disordered stretch occupies residues 288–309 (NDVPAITGHHPQDKEEDITRHP). The segment covering 297 to 309 (HPQDKEEDITRHP) has biased composition (basic and acidic residues).

Belongs to the TRAFAC class translation factor GTPase superfamily. Classic translation factor GTPase family. EF-G/EF-2 subfamily.

The protein localises to the cytoplasm. In terms of biological role, catalyzes the GTP-dependent ribosomal translocation step during translation elongation. During this step, the ribosome changes from the pre-translocational (PRE) to the post-translocational (POST) state as the newly formed A-site-bound peptidyl-tRNA and P-site-bound deacylated tRNA move to the P and E sites, respectively. Catalyzes the coordinated movement of the two tRNA molecules, the mRNA and conformational changes in the ribosome. The protein is Elongation factor G of Salinibacter ruber (strain DSM 13855 / M31).